The chain runs to 236 residues: 2-C-methyl-D-erythritol 4-phosphate cytidylyltransferase (236 aa).

Belongs to the IspD/TarI cytidylyltransferase family. IspD subfamily.

It catalyses the reaction 2-C-methyl-D-erythritol 4-phosphate + CTP + H(+) = 4-CDP-2-C-methyl-D-erythritol + diphosphate. It participates in isoprenoid biosynthesis; isopentenyl diphosphate biosynthesis via DXP pathway; isopentenyl diphosphate from 1-deoxy-D-xylulose 5-phosphate: step 2/6. Its function is as follows. Catalyzes the formation of 4-diphosphocytidyl-2-C-methyl-D-erythritol from CTP and 2-C-methyl-D-erythritol 4-phosphate (MEP). This Alkaliphilus oremlandii (strain OhILAs) (Clostridium oremlandii (strain OhILAs)) protein is 2-C-methyl-D-erythritol 4-phosphate cytidylyltransferase.